A 470-amino-acid chain; its full sequence is Putative multidrug resistance protein MdtD (470 aa).

Over 1 to 11 (MTEFPDNTRWQ) the chain is Periplasmic. A helical membrane pass occupies residues 12–32 (LWIVAFGFFMQSLDTTIVNTA). The Cytoplasmic segment spans residues 33–48 (LPSMAKSLGESPLHMH). Residues 49 to 69 (MVVVSYVLTVAVMLPASGWLA) traverse the membrane as a helical segment. At 70–76 (DKIGVRN) the chain is on the periplasmic side. A helical transmembrane segment spans residues 77–97 (IFFAAIVLFTLGSLFCALSGT). Residues 98 to 101 (LNQL) lie on the Cytoplasmic side of the membrane. The chain crosses the membrane as a helical span at residues 102–124 (VLARVLQGVGGAMMVPVGRLTVM). Residues 125 to 137 (KIVPRAQYMAAMT) lie on the Periplasmic side of the membrane. The chain crosses the membrane as a helical span at residues 138 to 158 (FVALPGQIGPLLGPALGGVLV). At 159–164 (EYASWH) the chain is on the cytoplasmic side. Residues 165–185 (WIFLINIPVGIVGAMATFMLM) traverse the membrane as a helical segment. Residues 186–196 (PNYTIETRRFD) are Periplasmic-facing. Residues 197–217 (LPGFLLLAIGMAVLTLALDGS) form a helical membrane-spanning segment. Residues 218 to 224 (KSMGISP) are Cytoplasmic-facing. The chain crosses the membrane as a helical span at residues 225-245 (WTLAGLAAGGAAAILLYLFHA). Residues 246 to 262 (KKNSGALFSLRLFRTPT) are Periplasmic-facing. The chain crosses the membrane as a helical span at residues 263 to 283 (FSLGLLGSFAGRIGSGMLPFM). The Cytoplasmic segment spans residues 284 to 285 (TP). Residues 286 to 306 (VFLQIGLGFSPFHAGLMMIPM) traverse the membrane as a helical segment. The Periplasmic portion of the chain corresponds to 307 to 341 (VLGSMGMKRIVVQIVNRFGYRRVLVATTLGLALVS). A helical transmembrane segment spans residues 342–362 (LLFMSVALLGWYYLLPLVLLL). Residues 363–395 (QGMVNSARFSSMNTLTLKDLPDTLASSGNSLLS) lie on the Cytoplasmic side of the membrane. Residues 396 to 416 (MIMQLSMSIGVTIAGMLLGMF) traverse the membrane as a helical segment. Residues 417 to 430 (GQQHIGIDSSATHH) are Periplasmic-facing. A helical membrane pass occupies residues 431 to 451 (VFMYTWLCMAVIIALPAIIFA). The Cytoplasmic portion of the chain corresponds to 452 to 470 (RVPNDTQQNMVISRRKRSL).

Belongs to the major facilitator superfamily. TCR/Tet family.

It is found in the cell inner membrane. In Salmonella typhi, this protein is Putative multidrug resistance protein MdtD.